The chain runs to 397 residues: Lysophospholipid transporter LplT (397 aa).

The Periplasmic portion of the chain corresponds to 1 to 17; that stretch reads MSESVHTNTSLWSKGMK. The chain crosses the membrane as a helical span at residues 18–38; the sequence is AVIVAQFLSAFGDNALLFATL. The Cytoplasmic segment spans residues 39–52; that stretch reads ALLKAQFYPEWSQP. The helical transmembrane segment at 53–73 threads the bilayer; the sequence is ILQMVFVGAYILFAPFVGQVA. The Periplasmic segment spans residues 74-90; that stretch reads DSFAKGRVMMFANGLKL. Residues 91–111 form a helical membrane-spanning segment; that stretch reads LGAASICFGINPFLGYTLVGV. The Cytoplasmic segment spans residues 112–144; sequence GAAAYSPAKYGILGELTTGSKLVKANGLMEAST. The helical transmembrane segment at 145–165 threads the bilayer; that stretch reads IAAILLGSVAGGVLADWHVLV. Alanine 166 is a topological domain (periplasmic). Residues 167–187 traverse the membrane as a helical segment; the sequence is LAACALAYGGAVVANIYIPKL. Residues 188 to 226 lie on the Cytoplasmic side of the membrane; it reads AAARPGQSWNLINMTRSFLNACTSLWRNGETRFSLVGTS. A helical transmembrane segment spans residues 227 to 247; that stretch reads LFWGAGVTLRFLLVLWVPVAL. Topologically, residues 248 to 256 are periplasmic; it reads GITDNATPT. The helical transmembrane segment at 257–277 threads the bilayer; it reads YLNAMVAIGIVVGAGAAAKLV. At 278–280 the chain is on the cytoplasmic side; the sequence is TLE. The chain crosses the membrane as a helical span at residues 281–301; the sequence is TMSRCMPAGILIGVVVLIFSL. Topologically, residues 302–304 are periplasmic; the sequence is QHE. A helical transmembrane segment spans residues 305 to 325; it reads LLPAYALLMLIGVMGGFFVVP. Over 326–343 the chain is Cytoplasmic; that stretch reads LNALLQERGKKSVGAGNA. A helical membrane pass occupies residues 344 to 364; sequence IAVQNLGENSAMLLMLGIYSL. At 365-366 the chain is on the periplasmic side; it reads AV. A helical transmembrane segment spans residues 367–387; that stretch reads MVGIPVVPIGIGFGALFALAI. Over 388–397 the chain is Cytoplasmic; it reads TALWIWQRRH.

The protein belongs to the major facilitator superfamily. LplT (TC 2.A.1.42) family.

It is found in the cell inner membrane. Catalyzes the facilitated diffusion of 2-acyl-glycero-3-phosphoethanolamine (2-acyl-GPE) into the cell. The polypeptide is Lysophospholipid transporter LplT (Shigella sonnei (strain Ss046)).